Reading from the N-terminus, the 1513-residue chain is DNA-directed RNA polymerase subunit beta'' (1513 aa).

The Zn(2+) site is built by Cys220, Cys296, Cys303, and Cys306. The segment at 644–769 (RTREKDSENE…EYGNPEEDSV (126 aa)) is disordered. Residues 659 to 679 (NEYRTREEECKTLEDEYRTRE) show a composition bias toward basic and acidic residues. A compositionally biased stretch (acidic residues) spans 680 to 707 (EEYETLEDEYGIPENEYETLEDEYGILE). Residues 726–737 (NKYRPREDKYGT) are compositionally biased toward basic and acidic residues. The segment covering 738–767 (LEEDSEDEHGTLEEDSEEDSEDEYGNPEED) has biased composition (acidic residues).

This sequence belongs to the RNA polymerase beta' chain family. RpoC2 subfamily. In plastids the minimal PEP RNA polymerase catalytic core is composed of four subunits: alpha, beta, beta', and beta''. When a (nuclear-encoded) sigma factor is associated with the core the holoenzyme is formed, which can initiate transcription. Zn(2+) is required as a cofactor.

The protein resides in the plastid. It is found in the chloroplast. It catalyses the reaction RNA(n) + a ribonucleoside 5'-triphosphate = RNA(n+1) + diphosphate. DNA-dependent RNA polymerase catalyzes the transcription of DNA into RNA using the four ribonucleoside triphosphates as substrates. The polypeptide is DNA-directed RNA polymerase subunit beta'' (Oryza sativa (Rice)).